Consider the following 398-residue polypeptide: Phospholipase C (398 aa).

A signal peptide spans 1-28; that stretch reads MKRKICKALICATLATSLWAGASTKVYA. W29, H39, D84, H96, H154, D158, H164, H176, and E180 together coordinate Zn(2+). Residues 29 to 278 form the Zn-dependent PLC domain; the sequence is WDGKIDGTGT…HDVSEGNDPS (250 aa). The linker stretch occupies residues 275–283; it reads NDPSVGKNV. Residues 284–398 enclose the PLAT domain; the sequence is KELVAYISTS…ISGNSTYNIK (115 aa). Ca(2+) is bound by residues D297, G299, T300, D301, D321, N322, G324, N325, D326, D364, and A365.

The protein belongs to the bacterial zinc-metallophospholipase C family. The cofactor is Ca(2+). Requires Zn(2+) as cofactor.

It localises to the secreted. It catalyses the reaction a 1,2-diacyl-sn-glycero-3-phosphocholine + H2O = phosphocholine + a 1,2-diacyl-sn-glycerol + H(+). Functionally, bacterial hemolysins are exotoxins that attack blood cell membranes and cause cell rupture. Constitutes an essential virulence factor in gas gangrene. Binds to eukaryotic membranes where it hydrolyzes both phosphatidylcholine and sphingomyelin. The diacylglycerol produced can activate both the arachidonic acid pathway, leading to modulation of the inflammatory response cascade and thrombosis, and protein kinase C, leading to activation of eukaryotic phospholipases and further membrane damage. Acts on human and mouse erythrocytes, but not on rabbit or horse erythrocytes. The polypeptide is Phospholipase C (plc) (Clostridium perfringens (strain 13 / Type A)).